The primary structure comprises 677 residues: Zinc finger protein 526 (677 aa).

C2H2-type zinc fingers lie at residues 57–79, 109–131, and 141–164; these read FMCSECGNLYNTLEEVLSHQEQH, FQCGECSQLILSPRELLAHQDAH, and YQCGDCQELFPSPELWVAHRKAQH. Residues 167–190 form a disordered region; the sequence is TAAAKPPVPPPLPPVTPPPPPPAP. Residues 172-190 are compositionally biased toward pro residues; it reads PPVPPPLPPVTPPPPPPAP. Residues 198–220 form a C2H2-type 4 zinc finger; that stretch reads YECPECSTLCTTPEEFLEHQGTH. Positions 223–232 are enriched in basic and acidic residues; sequence SLEKEEHNGL. The disordered stretch occupies residues 223-300; it reads SLEKEEHNGL…RRASHGPASA (78 aa). The span at 233–257 shows a compositional bias: acidic residues; it reads EEEEEDDEDDNEETEEEEEAAAEVG. C2H2-type zinc fingers lie at residues 304 to 326, 331 to 353, 359 to 381, and 387 to 408; these read FYCSQCQRSFSSANRLLAHGRAH, HECTTCSKVFKKAASLEQHLRLH, YLCVDCGRGFGTELTLVAHRRAH, and HRCRCGKTFSNMTKFLYHRRTH. The interval 408–449 is disordered; that stretch reads HAGKSGAPPSAAPPTVASAVASLAPAEPTPPPPAPPTPPAQL. Low complexity predominate over residues 410–433; that stretch reads GKSGAPPSAAPPTVASAVASLAPA. Positions 434–449 are enriched in pro residues; that stretch reads EPTPPPPAPPTPPAQL. C2H2-type zinc fingers lie at residues 449–472, 479–501, 507–529, 535–557, and 580–602; these read LPCPQCPKSFASASRLSRHRRAVH, HRCGVCGKGFKKLVHVRNHLRTH, FQCHACGKTFASLANLSRHQLTH, YQCLDCGKRFTQSSNLQQHRRLH, and YYCGTCGRWFRAMAGLRLHQRVH. The interval 608-627 is disordered; the sequence is LTLQPPRSPPPAPPPPPEPQ. Residues 613-626 show a composition bias toward pro residues; it reads PRSPPPAPPPPPEP.

Belongs to the krueppel C2H2-type zinc-finger protein family.

It localises to the nucleus. May be involved in transcriptional regulation. This is Zinc finger protein 526 (ZNF526) from Bos taurus (Bovine).